Reading from the N-terminus, the 363-residue chain is Exopolygalacturonase rpg13 (363 aa).

Residues 1-26 (MVKFLSLTSSVTALLLLSLGANGVAA) form the signal peptide. Residues asparagine 121, asparagine 142, and asparagine 150 are each glycosylated (N-linked (GlcNAc...) asparagine). PbH1 repeat units lie at residues 143–173 (ATDV…DVSR), 174–195 (SSNV…AINE), 197–217 (VTNV…SVGS), 227–248 (VKTV…RIKT), and 256–277 (VSDI…LITT). Aspartate 188 functions as the Proton donor in the catalytic mechanism. Residues cysteine 190 and cysteine 207 are joined by a disulfide bond. A glycan (N-linked (GlcNAc...) asparagine) is linked at asparagine 199. The active site involves histidine 211. Residue asparagine 321 is glycosylated (N-linked (GlcNAc...) asparagine). Residues cysteine 322 and cysteine 328 are joined by a disulfide bond. A PbH1 6 repeat occupies 328-354 (CTDFTLSGVKITKASNTPKNVCVNLDG).

Belongs to the glycosyl hydrolase 28 family. In terms of processing, N-glycosylated.

The protein localises to the secreted. The catalysed reaction is [(1-&gt;4)-alpha-D-galacturonosyl](n) + H2O = alpha-D-galacturonate + [(1-&gt;4)-alpha-D-galacturonosyl](n-1). Its function is as follows. Specific in hydrolyzing the terminal glycosidic bond of polygalacturonic acid and oligogalacturonates. Has no activity towards trigalacturonic acid. The sequence is that of Exopolygalacturonase rpg13 from Rhizopus delemar (strain RA 99-880 / ATCC MYA-4621 / FGSC 9543 / NRRL 43880) (Mucormycosis agent).